Here is a 994-residue protein sequence, read N- to C-terminus: Sarcoplasmic/endoplasmic reticulum calcium ATPase 1 (994 aa).

The Cytoplasmic portion of the chain corresponds to 1-48 (MEAAHSKSTEECLSYFGVSETTGLTPDQVKRHLEKYGPNELPAEEGKS). The helical transmembrane segment at 49 to 69 (LWELVVEQFEDLLVRILLLAA) threads the bilayer. Residues 70–89 (CISFVLAWFEEGEETVTAFV) lie on the Lumenal side of the membrane. Residues 90–110 (EPFVILLILIANAIVGVWQER) traverse the membrane as a helical segment. Residues 111–253 (NAENAIEALK…QDKTPLQQKL (143 aa)) lie on the Cytoplasmic side of the membrane. A helical membrane pass occupies residues 254 to 273 (DEFGEQLSKVISLICVAVWL). Residues 274–295 (INIGHFNDPVHGGSWFRGAIYY) lie on the Lumenal side of the membrane. Residues 296 to 313 (FKIAVALAVAAIPEGLPA) form a helical membrane-spanning segment. 4 residues coordinate Ca(2+): Val304, Ala305, Ile307, and Glu309. Residues 314-757 (VITTCLALGT…EEGRAIYNNM (444 aa)) lie on the Cytoplasmic side of the membrane. Asp351 (4-aspartylphosphate intermediate) is an active-site residue. Residues Asp351 and Thr353 each coordinate Mg(2+). Thr353 serves as a coordination point for ATP. Position 441 is a phosphothreonine (Thr441). Residues Glu442, Arg489, Lys515, and Arg560 each coordinate ATP. Thr569 bears the Phosphothreonine mark. The residue at position 581 (Ser581) is a Phosphoserine. ATP-binding residues include Thr625, Gly626, and Asp627. Ser643 is modified (phosphoserine). ATP is bound by residues Arg678 and Lys684. Asp703 is a binding site for Mg(2+). An ATP-binding site is contributed by Asn706. The helical transmembrane segment at 758-777 (KQFIRYLISSNVGEVVCIFL) threads the bilayer. Residues Asn768 and Glu771 each contribute to the Ca(2+) site. Over 778–787 (TAALGLPEAL) the chain is Lumenal. A helical membrane pass occupies residues 788–808 (IPVQLLWVNLVTDGLPATALG). The segment at 788 to 808 (IPVQLLWVNLVTDGLPATALG) is interaction with PLN. Positions 796, 799, and 800 each coordinate Ca(2+). The Cytoplasmic segment spans residues 809-828 (FNPPDLDIMDRPPRSPKEPL). Residues 829–851 (ISGWLFFRYMAIGGYVGAATVGA) traverse the membrane as a helical segment. The Lumenal segment spans residues 852–897 (AAWWFLYAEDGPHVSYHQLTHFMQCTEHNPEFDGLDCEVFEAPEPM). Residues Cys876 and Cys888 are joined by a disulfide bond. The chain crosses the membrane as a helical span at residues 898–917 (TMALSVLVTIEMCNALNSLS). Ca(2+) is bound at residue Glu908. Residues 918–930 (ENQSLLRMPPWVN) lie on the Cytoplasmic side of the membrane. A helical transmembrane segment spans residues 931–949 (IWLLGSICLSMSLHFLILY). An interaction with PLN region spans residues 932–943 (WLLGSICLSMSL). Residues 950–964 (VDPLPMIFKLRALDF) are Lumenal-facing. The chain crosses the membrane as a helical span at residues 965–985 (TQWLMVLKISLPVIGLDELLK). Topologically, residues 986–994 (FIARNYLEG) are cytoplasmic.

Belongs to the cation transport ATPase (P-type) (TC 3.A.3) family. Type IIA subfamily. In terms of assembly, interacts with sarcolipin (SLN). Interacts with phospholamban (PLN). Interacts with myoregulin (MRLN). Interacts with DWORF. Interacts with VMP1. Mg(2+) is required as a cofactor.

The protein localises to the endoplasmic reticulum membrane. Its subcellular location is the sarcoplasmic reticulum membrane. It catalyses the reaction Ca(2+)(in) + ATP + H2O = Ca(2+)(out) + ADP + phosphate + H(+). With respect to regulation, inhibited by sarcolipin (SLN) and myoregulin (MRLN). Has also been shown to be reversibly inhibited by phospholamban (PLN) at low calcium concentrations in vitro. Dephosphorylated PLN decreases the apparent affinity of the ATPase for calcium in vitro and this inhibition is regulated by the phosphorylation of PLN. Enhanced by DWORF; DWORF increases activity by displacing sarcolipin (SLN), phospholamban (PLN) and myoregulin (MRLN). Functionally, key regulator of striated muscle performance by acting as the major Ca(2+) ATPase responsible for the reuptake of cytosolic Ca(2+) into the sarcoplasmic reticulum. Catalyzes the hydrolysis of ATP coupled with the translocation of calcium from the cytosol to the sarcoplasmic reticulum lumen. Contributes to calcium sequestration involved in muscular excitation/contraction. This chain is Sarcoplasmic/endoplasmic reticulum calcium ATPase 1 (Atp2a1), found in Mus musculus (Mouse).